The primary structure comprises 271 residues: Acyl-[acyl-carrier-protein]--UDP-N-acetylglucosamine O-acyltransferase (271 aa).

This sequence belongs to the transferase hexapeptide repeat family. LpxA subfamily. As to quaternary structure, homotrimer.

It is found in the cytoplasm. The catalysed reaction is a (3R)-hydroxyacyl-[ACP] + UDP-N-acetyl-alpha-D-glucosamine = a UDP-3-O-[(3R)-3-hydroxyacyl]-N-acetyl-alpha-D-glucosamine + holo-[ACP]. It functions in the pathway glycolipid biosynthesis; lipid IV(A) biosynthesis; lipid IV(A) from (3R)-3-hydroxytetradecanoyl-[acyl-carrier-protein] and UDP-N-acetyl-alpha-D-glucosamine: step 1/6. Functionally, involved in the biosynthesis of lipid A, a phosphorylated glycolipid that anchors the lipopolysaccharide to the outer membrane of the cell. This chain is Acyl-[acyl-carrier-protein]--UDP-N-acetylglucosamine O-acyltransferase, found in Azorhizobium caulinodans (strain ATCC 43989 / DSM 5975 / JCM 20966 / LMG 6465 / NBRC 14845 / NCIMB 13405 / ORS 571).